We begin with the raw amino-acid sequence, 343 residues long: Tribbles homolog 2 (343 aa).

Residues 25 to 50 (EELSSIRSAEPSQSFSPNLGSPSPPE) form a disordered region. Over residues 29–45 (SIRSAEPSQSFSPNLGS) the composition is skewed to polar residues. The region spanning 61–308 (IGKYLLLEPL…SQEILDHPWF (248 aa)) is the Protein kinase domain.

The protein belongs to the protein kinase superfamily. CAMK Ser/Thr protein kinase family. Tribbles subfamily. Expressed in granulosa cells of the dominant follicles of the ovary and down-regulated in ovulatory follicles.

Its subcellular location is the cytoplasm. The protein localises to the cytoskeleton. Functionally, interacts with MAPK kinases and regulates activation of MAP kinases. Does not display kinase activity. This Bos taurus (Bovine) protein is Tribbles homolog 2.